An 82-amino-acid polypeptide reads, in one-letter code: Small ribosomal subunit protein bS16 (82 aa).

The protein belongs to the bacterial ribosomal protein bS16 family.

This Dehalococcoides mccartyi (strain ATCC BAA-2100 / JCM 16839 / KCTC 5957 / BAV1) protein is Small ribosomal subunit protein bS16.